Reading from the N-terminus, the 216-residue chain is Small ribosomal subunit protein uS3c (216 aa).

Positions 39–109 constitute a KH type-2 domain; sequence IRSYINRELE…SIRINVIELT (71 aa).

It belongs to the universal ribosomal protein uS3 family. Part of the 30S ribosomal subunit.

It is found in the plastid. It localises to the chloroplast. The sequence is that of Small ribosomal subunit protein uS3c (rps3) from Guillardia theta (Cryptophyte).